The primary structure comprises 160 residues: MAPK regulated corepressor interacting protein 2 (160 aa).

Met-1 bears the N-acetylmethionine mark. A disordered region spans residues 1–64 (MYTITKGPSK…GPWPLSSPGP (64 aa)). Residue Arg-35 is modified to Omega-N-methylarginine. Pro residues predominate over residues 37–61 (PAPPTSQPPRAQPFAQPPGPWPLSS). A Phosphoserine modification is found at Ser-61. At Arg-65 the chain carries Omega-N-methylarginine. Ser-82 is modified (phosphoserine).

The protein belongs to the MCRIP family. Interacts with DDX6. Interacts with MCRIP1.

The protein localises to the cytoplasm. It is found in the stress granule. Its subcellular location is the nucleus. The polypeptide is MAPK regulated corepressor interacting protein 2 (MCRIP2) (Homo sapiens (Human)).